Here is a 114-residue protein sequence, read N- to C-terminus: rRNA-processing protein cgrA (114 aa).

The tract at residues 1–96 (MSASESAPSA…YDKMAEKMHR (96 aa)) is disordered. The stretch at 40–101 (AKRLEARKHQ…EKMHRKRVER (62 aa)) forms a coiled coil. The span at 41–93 (KRLEARKHQEAVKEHERELKEEKEAERQAHIQRIKDRRAAKEEKERYDKMAEK) shows a compositional bias: basic and acidic residues.

Belongs to the CGR1 family.

The protein resides in the nucleus. It localises to the nucleolus. Its function is as follows. Involved in nucleolar integrity and required for processing of the pre-rRNA for the 60S ribosome subunit. The protein is rRNA-processing protein cgrA (cgrA) of Aspergillus terreus (strain NIH 2624 / FGSC A1156).